The following is a 589-amino-acid chain: Kelch-like protein 25 (589 aa).

Residues 46-114 (TDVTLWAGNR…AYSSKIIINE (69 aa)) form the BTB domain. The BACK domain occupies 149 to 250 (CLGMMILSDA…LPSELLKEAV (102 aa)). Kelch repeat units follow at residues 296 to 340 (TLLI…AIGC), 341 to 388 (KVYV…ELEN), 389 to 444 (CLYV…SAKL), 446 to 492 (LFAF…VLGS), 493 to 538 (QIFI…ASGN), and 539 to 585 (KVYV…STWK).

In terms of assembly, component of the BCR(KLHL25) E3 ubiquitin ligase complex, at least composed of cul3, klhl25 and rbx1.

The protein operates within protein modification; protein ubiquitination. Its function is as follows. Substrate-specific adapter of a BCR (BTB-CUL3-RBX1) E3 ubiquitin ligase complex involved in various processes, such as translation homeostasis and lipid synthesis. The BCR(KLHL25) ubiquitin ligase complex acts by mediating ubiquitination of hypophosphorylated eif4ebp1 (4E-BP1): ubiquitination and subsequent degradation of hypophosphorylated EIF4EBP1 (4E-BP1) probably serves as a homeostatic mechanism to maintain translation and prevent eIF4E inhibition when eIF4E levels are low. The BCR(KLHL25) complex also acts as a regulator of lipid synthesis by mediating ubiquitination and degradation of ACLY, thereby inhibiting lipid synthesis. This Xenopus tropicalis (Western clawed frog) protein is Kelch-like protein 25.